Reading from the N-terminus, the 206-residue chain is uncharacterized protein (206 aa).

This is an uncharacterized protein from Saccharomyces cerevisiae (strain ATCC 204508 / S288c) (Baker's yeast).